We begin with the raw amino-acid sequence, 291 residues long: MSYLKKPDWLKIRVKADQKIDDVIEILKMFSLHTVCEEAQCPNIYECFSKKTATFLIMGDVCTRNCTFCDVKKGKPVKLNSDEPKMVANAVGALGLKYVVITSVTRDDLPDGGASHFAECIRSIKGKRPYTKIEVLIPDFKGSFESVSKVVEASPDVVAHNIETIERLYPCVRPLASYKRSLDVLRMVKEIDKNIFTKSGIMVGLGETKDEVKKALEDLRNAECDFVTIGQYLSPSKNHHPVVEFVHPDVFEEYKEFAISIGFKFVMSGPLVRSSYMAENTKDIIENVRKI.

Residues Cys36, Cys41, Cys47, Cys62, Cys66, Cys69, and Ser275 each coordinate [4Fe-4S] cluster. Residues 48-264 form the Radical SAM core domain; it reads FSKKTATFLI…KEFAISIGFK (217 aa).

The protein belongs to the radical SAM superfamily. Lipoyl synthase family. It depends on [4Fe-4S] cluster as a cofactor.

The protein localises to the cytoplasm. It catalyses the reaction [[Fe-S] cluster scaffold protein carrying a second [4Fe-4S](2+) cluster] + N(6)-octanoyl-L-lysyl-[protein] + 2 oxidized [2Fe-2S]-[ferredoxin] + 2 S-adenosyl-L-methionine + 4 H(+) = [[Fe-S] cluster scaffold protein] + N(6)-[(R)-dihydrolipoyl]-L-lysyl-[protein] + 4 Fe(3+) + 2 hydrogen sulfide + 2 5'-deoxyadenosine + 2 L-methionine + 2 reduced [2Fe-2S]-[ferredoxin]. It participates in protein modification; protein lipoylation via endogenous pathway; protein N(6)-(lipoyl)lysine from octanoyl-[acyl-carrier-protein]: step 2/2. Its function is as follows. Catalyzes the radical-mediated insertion of two sulfur atoms into the C-6 and C-8 positions of the octanoyl moiety bound to the lipoyl domains of lipoate-dependent enzymes, thereby converting the octanoylated domains into lipoylated derivatives. The protein is Lipoyl synthase of Caldicellulosiruptor bescii (strain ATCC BAA-1888 / DSM 6725 / KCTC 15123 / Z-1320) (Anaerocellum thermophilum).